The sequence spans 291 residues: Methionine aminopeptidase (291 aa).

A substrate-binding site is contributed by histidine 65. 3 residues coordinate a divalent metal cation: aspartate 85, aspartate 96, and histidine 155. Histidine 163 contributes to the substrate binding site. The a divalent metal cation site is built by glutamate 188 and glutamate 276.

This sequence belongs to the peptidase M24A family. Methionine aminopeptidase archaeal type 2 subfamily. Monomer. The cofactor is Co(2+). Requires Zn(2+) as cofactor. It depends on Mn(2+) as a cofactor. Fe(2+) is required as a cofactor.

It catalyses the reaction Release of N-terminal amino acids, preferentially methionine, from peptides and arylamides.. In terms of biological role, removes the N-terminal methionine from nascent proteins. The N-terminal methionine is often cleaved when the second residue in the primary sequence is small and uncharged (Met-Ala-, Cys, Gly, Pro, Ser, Thr, or Val). This Archaeoglobus fulgidus (strain ATCC 49558 / DSM 4304 / JCM 9628 / NBRC 100126 / VC-16) protein is Methionine aminopeptidase.